A 980-amino-acid polypeptide reads, in one-letter code: Putative leucine-rich repeat receptor-like serine/threonine-protein kinase At2g24130 (980 aa).

An N-terminal signal peptide occupies residues 1-20; sequence MDYCSLLVVSFLITVMTVLA. The Extracellular portion of the chain corresponds to 21 to 593; sequence SKENDHELIK…ACKKKHKYPS (573 aa). Asn55 and Asn88 each carry an N-linked (GlcNAc...) asparagine glycan. LRR repeat units lie at residues 65–89, 90–113, 115–138, 139–162, 165–189, 191–214, 215–238, and 240–263; these read STQV…IANL, TGLT…IGSL, ETLK…LGLL, NRLV…LFCN, SSSL…YHCH, KELR…LSNS, TNLK…VISK, and PQLQ…NLEP. N-linked (GlcNAc...) asparagine glycosylation is found at Asn152, Asn162, Asn175, and Asn213. Asn257 and Asn270 each carry an N-linked (GlcNAc...) asparagine glycan. 12 LRR repeats span residues 271-295, 296-320, 322-344, 345-370, 372-391, 392-416, 417-440, 442-463, 464-490, 491-514, 515-537, and 539-563; these read SSDL…VRHL, SVNL…ISNL, NLTL…LCKL, SKLE…DIPR, GLLD…SFGN, LSQL…LGKC, INLE…VVSN, RNLK…PLEL, SKMD…LGSC, IALE…LGQL, PYLK…SFQQ, and STLK…SFSK. Residues Asn322 and Asn327 are each glycosylated (N-linked (GlcNAc...) asparagine). N-linked (GlcNAc...) asparagine glycosylation is found at Asn380 and Asn391. 2 N-linked (GlcNAc...) asparagine glycosylation sites follow: Asn428 and Asn449. Asn497 is a glycosylation site (N-linked (GlcNAc...) asparagine). Residues Asn545 and Asn554 are each glycosylated (N-linked (GlcNAc...) asparagine). A helical transmembrane segment spans residues 594-614; sequence VLLPVLLSLIATPVLCVFGYP. The Cytoplasmic portion of the chain corresponds to 615-980; it reads LVQRSRFGKN…SQETQGEASS (366 aa). Position 658 is a phosphothreonine (Thr658). In terms of domain architecture, Protein kinase spans 661-960; sequence FNASSLIGSG…HEMGRLKEYL (300 aa). Residues 667–675 and Lys689 each bind ATP; that span reads IGSGRFGHV. Phosphotyrosine is present on Tyr775. Asp788 (proton acceptor) is an active-site residue. Tyr841 carries the post-translational modification Phosphotyrosine.

This sequence belongs to the protein kinase superfamily. Ser/Thr protein kinase family.

It localises to the cell membrane. The enzyme catalyses L-seryl-[protein] + ATP = O-phospho-L-seryl-[protein] + ADP + H(+). The catalysed reaction is L-threonyl-[protein] + ATP = O-phospho-L-threonyl-[protein] + ADP + H(+). In Arabidopsis thaliana (Mouse-ear cress), this protein is Putative leucine-rich repeat receptor-like serine/threonine-protein kinase At2g24130.